Consider the following 253-residue polypeptide: ATP synthase subunit b 1 (253 aa).

Residues 2–22 form a helical membrane-spanning segment; it reads LIDWFTVIAELVNFLILVWLL.

The protein belongs to the ATPase B chain family. F-type ATPases have 2 components, F(1) - the catalytic core - and F(0) - the membrane proton channel. F(1) has five subunits: alpha(3), beta(3), gamma(1), delta(1), epsilon(1). F(0) has four main subunits: a(1), b(2) and c(10-14). The alpha and beta chains form an alternating ring which encloses part of the gamma chain. F(1) is attached to F(0) by a central stalk formed by the gamma and epsilon chains, while a peripheral stalk is formed by the delta and b chains.

The protein localises to the cell inner membrane. Functionally, f(1)F(0) ATP synthase produces ATP from ADP in the presence of a proton or sodium gradient. F-type ATPases consist of two structural domains, F(1) containing the extramembraneous catalytic core and F(0) containing the membrane proton channel, linked together by a central stalk and a peripheral stalk. During catalysis, ATP synthesis in the catalytic domain of F(1) is coupled via a rotary mechanism of the central stalk subunits to proton translocation. In terms of biological role, component of the F(0) channel, it forms part of the peripheral stalk, linking F(1) to F(0). This chain is ATP synthase subunit b 1, found in Prosthecochloris aestuarii (strain DSM 271 / SK 413).